The following is a 128-amino-acid chain: Flagellar hook-basal body complex protein FliE (128 aa).

A disordered region spans residues 1 to 60 (MRPVASFRPPPTFSALQGGASSQATKTAGIDQRGTNQAFSLLDPQSTQSNSTDSSFGEMG). Positions 33-55 (RGTNQAFSLLDPQSTQSNSTDSS) are enriched in polar residues.

This sequence belongs to the FliE family.

The protein localises to the bacterial flagellum basal body. The sequence is that of Flagellar hook-basal body complex protein FliE from Rhodopirellula baltica (strain DSM 10527 / NCIMB 13988 / SH1).